The primary structure comprises 824 residues: Leucine--tRNA ligase (824 aa).

The 'HIGH' region motif lies at 42–52 (PYPSGRIHMGH). The 'KMSKS' region signature appears at 581–585 (KMSKS). Residue lysine 584 coordinates ATP.

This sequence belongs to the class-I aminoacyl-tRNA synthetase family.

Its subcellular location is the cytoplasm. The enzyme catalyses tRNA(Leu) + L-leucine + ATP = L-leucyl-tRNA(Leu) + AMP + diphosphate. The sequence is that of Leucine--tRNA ligase from Geobacter metallireducens (strain ATCC 53774 / DSM 7210 / GS-15).